A 450-amino-acid chain; its full sequence is UDP-N-acetylmuramoylalanine--D-glutamate ligase (450 aa).

111–117 contributes to the ATP binding site; it reads GTNGKST.

The protein belongs to the MurCDEF family.

The protein resides in the cytoplasm. It catalyses the reaction UDP-N-acetyl-alpha-D-muramoyl-L-alanine + D-glutamate + ATP = UDP-N-acetyl-alpha-D-muramoyl-L-alanyl-D-glutamate + ADP + phosphate + H(+). Its pathway is cell wall biogenesis; peptidoglycan biosynthesis. Functionally, cell wall formation. Catalyzes the addition of glutamate to the nucleotide precursor UDP-N-acetylmuramoyl-L-alanine (UMA). The polypeptide is UDP-N-acetylmuramoylalanine--D-glutamate ligase (Rickettsia bellii (strain RML369-C)).